The following is a 614-amino-acid chain: Male-specific lethal 1 homolog (614 aa).

2 disordered regions span residues 1-127 and 147-217; these read MTMR…GCSP and KEPT…GASS. Ser66 and Ser126 each carry phosphoserine. Residues 158–169 show a composition bias toward low complexity; it reads GAASPAATASDP. Over residues 170 to 184 the composition is skewed to pro residues; the sequence is AGPPPLPLPGPPPLA. A compositionally biased stretch (low complexity) spans 185-194; the sequence is PTATAGTLAA. The residue at position 205 (Ser205) is a Phosphoserine. Residues 213–282 are a coiled coil; that stretch reads SGASSQAACL…KDNEKERHKL (70 aa). The tract at residues 223-237 is interaction with MSL2; sequence KQILLLQLDLIEQQQ. Composition is skewed to basic and acidic residues over residues 272 to 281 and 294 to 304; these read KKDNEKERHK and TELSEKIKLEC. The tract at residues 272 to 420 is disordered; the sequence is KKDNEKERHK…PKEKAFSSEI (149 aa). Lys301 participates in a covalent cross-link: Glycyl lysine isopeptide (Lys-Gly) (interchain with G-Cter in SUMO2). Residues 317–346 carry the Nuclear localization signal motif; that stretch reads PKPFSCGRSGKGHKRKSPFGSTERKTPVKK. Lys353 carries the N6-acetyllysine modification. Glycyl lysine isopeptide (Lys-Gly) (interchain with G-Cter in SUMO2) cross-links involve residues Lys365 and Lys378. The span at 376-392 shows a compositional bias: basic and acidic residues; it reads VCKRELRSQETPEKPRS. Ser393 bears the Phosphoserine mark. The segment covering 393-407 has biased composition (polar residues); it reads SVDTPPRLSTPQKGP. Phosphothreonine is present on Thr396. Position 442 is a phosphoserine (Ser442). One can recognise a PEHE domain in the interval 472–591; the sequence is VLAVPSWRDH…LTPQNFELPW (120 aa). Residues 496–514 are interaction with KAT8 HAT domain; sequence ENLDDSVFSKRHAKLELDE. The Bipartite nuclear localization signal motif lies at 505–519; sequence KRHAKLELDEKRRKR. The interval 550–591 is sufficient for interaction with MSL3 MRG domain; it reads EVTSFFPEPDDVESLMITPFLPVVAFGRPLPKLTPQNFELPW.

Belongs to the msl-1 family. Component of a multisubunit histone acetyltransferase complex (MSL) at least composed of the KAT8/MOF/MYST1, MSL1/hampin, MSL2 and MSL3. Forms a MSL heterotetrameric core with MSL2. Interacts (via PEHE domain) with KAT8 (via HAT domain) and MSL3 (via MRG domain); both interactions are direct. Directly interacts with NUPR1. Interacts with TP53BP1; this interaction may be required for MSL1 DNA repair activity, but not for histone acetyltransferase activity. Interacts with TTC4, ECM2 and PIHD1. In terms of processing, sumoylated with SUMO1.

It is found in the nucleus. The protein resides in the nucleoplasm. Its subcellular location is the nucleus speckle. Its function is as follows. Non-catalytic component of the MSL histone acetyltransferase complex, a multiprotein complex that mediates the majority of histone H4 acetylation at 'Lys-16' (H4K16ac), an epigenetic mark that prevents chromatin compaction. The MSL complex is required for chromosome stability and genome integrity by maintaining homeostatic levels of H4K16ac. The MSL complex is also involved in gene dosage by promoting up-regulation of genes expressed by the X chromosome. X up-regulation is required to compensate for autosomal biallelic expression. The MSL complex also participates in gene dosage compensation by promoting expression of Tsix non-coding RNA. Within the MSL complex, acts as a scaffold to tether MSL3 and KAT8 together for enzymatic activity regulation. Greatly enhances MSL2 E3 ubiquitin ligase activity, promoting monoubiquitination of histone H2B at 'Lys-34' (H2BK34Ub). This modification in turn stimulates histone H3 methylation at 'Lys-4' (H3K4me) and 'Lys-79' (H3K79me) and leads to gene activation, including that of HOXA9 and MEIS1. The polypeptide is Male-specific lethal 1 homolog (Homo sapiens (Human)).